Reading from the N-terminus, the 487-residue chain is Fatty acid desaturase 2-like protein FADS2B (487 aa).

Residues 1–11 (MKLEEKLEHNE) are compositionally biased toward basic and acidic residues. Positions 1–20 (MKLEEKLEHNESLVGKSRPC) are disordered. Topologically, residues 1–175 (MKLEEKLEHN…AMNMFSANLR (175 aa)) are cytoplasmic. In terms of domain architecture, Cytochrome b5 heme-binding spans 62–139 (LNLYTWQEIQ…LKPLLIGELS (78 aa)). Histidine 97 and histidine 120 together coordinate heme. A helical membrane pass occupies residues 176 to 196 (FFFLHLAQILILEISAWLILH). The Lumenal segment spans residues 197 to 201 (HFGSS). Residues 202-222 (WLVTILISFLLTVSQAQCSFL) traverse the membrane as a helical segment. Residues 223–307 (QHDLGHLSMF…IKYIDYEKQH (85 aa)) lie on the Cytoplasmic side of the membrane. A Histidine box-1 motif is present at residues 224–228 (HDLGH). The Histidine box-2 motif lies at 261–265 (HFQHH). A helical membrane pass occupies residues 308 to 328 (LYFYMVALPFLMPVYFNLQSM). The Lumenal segment spans residues 329-349 (QVMYLRKYWMDIAWVSSFYIR). The chain crosses the membrane as a helical span at residues 350 to 370 (YFITFGPFYGIFGTVLLIYLV). The Cytoplasmic segment spans residues 371–487 (KFIESPWIAY…ASLWMNAYYE (117 aa)). Residues 426 to 430 (QIEHH) carry the Histidine box-3 motif.

The protein belongs to the fatty acid desaturase type 1 family.

Its subcellular location is the endoplasmic reticulum membrane. The protein operates within lipid metabolism; polyunsaturated fatty acid biosynthesis. The sequence is that of Fatty acid desaturase 2-like protein FADS2B from Mus musculus (Mouse).